The primary structure comprises 162 residues: Ribosome maturation factor RimM (162 aa).

Residues 86–160 (EGRYYYFALI…SIHVDPIPGL (75 aa)) form the PRC barrel domain.

This sequence belongs to the RimM family. As to quaternary structure, binds ribosomal protein uS19.

The protein resides in the cytoplasm. An accessory protein needed during the final step in the assembly of 30S ribosomal subunit, possibly for assembly of the head region. Essential for efficient processing of 16S rRNA. May be needed both before and after RbfA during the maturation of 16S rRNA. It has affinity for free ribosomal 30S subunits but not for 70S ribosomes. The protein is Ribosome maturation factor RimM of Thermus thermophilus (strain ATCC 27634 / DSM 579 / HB8).